We begin with the raw amino-acid sequence, 453 residues long: MSQLNPKVGFVSLGCPKALVDSERILTQLRSEGYDIVPSYDSADVVVVNTCGFIDSAVTESLDAIGEAMNQNGKVIVTGCLGKRPEQIREAYPNVLAVSGPQDYQSVMEAVHEALPPKHDPFVDLVPDYGIKLTPRHYAYLKISEGCNHKCSFCIIPSMRGKLVSRPVDEVLREAERLVRGGVRELLVVSQDTSAYGVDVKYAEKMWRNKAYQTRLKALCEGLSELDAWVRMHYVYPYPHVDEVVPLMAENRILPYLDIPFQHASPRILRLMKRPGAVEKTLERVQNWRRIAPDITVRSTFIVGFPGETEAEFEELLSFLDEAQLDRVGAFAYSPVEGATANDLPDAVPEEVKQERLARFMEKQAQISAARLEAKIGTVQQCLVDAIEGDIAVARSKADAPEIDGLVHIQNADQVPLRVGEFVDVEITESDEHDLYGDALPAATRPAFDLKML.

One can recognise an MTTase N-terminal domain in the interval 6–116; sequence PKVGFVSLGC…VMEAVHEALP (111 aa). The [4Fe-4S] cluster site is built by Cys-15, Cys-51, Cys-80, Cys-147, Cys-151, and Cys-154. A Radical SAM core domain is found at 133 to 370; the sequence is LTPRHYAYLK…MEKQAQISAA (238 aa). The TRAM domain occupies 373–441; it reads EAKIGTVQQC…EHDLYGDALP (69 aa).

It belongs to the methylthiotransferase family. RimO subfamily. [4Fe-4S] cluster is required as a cofactor.

It localises to the cytoplasm. The enzyme catalyses L-aspartate(89)-[ribosomal protein uS12]-hydrogen + (sulfur carrier)-SH + AH2 + 2 S-adenosyl-L-methionine = 3-methylsulfanyl-L-aspartate(89)-[ribosomal protein uS12]-hydrogen + (sulfur carrier)-H + 5'-deoxyadenosine + L-methionine + A + S-adenosyl-L-homocysteine + 2 H(+). Its function is as follows. Catalyzes the methylthiolation of an aspartic acid residue of ribosomal protein uS12. The protein is Ribosomal protein uS12 methylthiotransferase RimO of Stenotrophomonas maltophilia (strain K279a).